The following is a 656-amino-acid chain: UvrABC system protein B (656 aa).

A Helicase ATP-binding domain is found at glutamate 23–arginine 180. Glycine 36–threonine 43 is an ATP binding site. The Beta-hairpin motif lies at tyrosine 89–isoleucine 112. In terms of domain architecture, Helicase C-terminal spans glutamine 426 to leucine 588. The UVR domain maps to glutamate 614–glutamate 649.

It belongs to the UvrB family. Forms a heterotetramer with UvrA during the search for lesions. Interacts with UvrC in an incision complex.

The protein resides in the cytoplasm. In terms of biological role, the UvrABC repair system catalyzes the recognition and processing of DNA lesions. A damage recognition complex composed of 2 UvrA and 2 UvrB subunits scans DNA for abnormalities. Upon binding of the UvrA(2)B(2) complex to a putative damaged site, the DNA wraps around one UvrB monomer. DNA wrap is dependent on ATP binding by UvrB and probably causes local melting of the DNA helix, facilitating insertion of UvrB beta-hairpin between the DNA strands. Then UvrB probes one DNA strand for the presence of a lesion. If a lesion is found the UvrA subunits dissociate and the UvrB-DNA preincision complex is formed. This complex is subsequently bound by UvrC and the second UvrB is released. If no lesion is found, the DNA wraps around the other UvrB subunit that will check the other stand for damage. In Pseudothermotoga lettingae (strain ATCC BAA-301 / DSM 14385 / NBRC 107922 / TMO) (Thermotoga lettingae), this protein is UvrABC system protein B.